Reading from the N-terminus, the 72-residue chain is Translation initiation factor IF-1 (72 aa).

The region spanning 1–72 (MSKNDVIEVE…TRGRIVYRFK (72 aa)) is the S1-like domain.

This sequence belongs to the IF-1 family. As to quaternary structure, component of the 30S ribosomal translation pre-initiation complex which assembles on the 30S ribosome in the order IF-2 and IF-3, IF-1 and N-formylmethionyl-tRNA(fMet); mRNA recruitment can occur at any time during PIC assembly.

It localises to the cytoplasm. Its function is as follows. One of the essential components for the initiation of protein synthesis. Stabilizes the binding of IF-2 and IF-3 on the 30S subunit to which N-formylmethionyl-tRNA(fMet) subsequently binds. Helps modulate mRNA selection, yielding the 30S pre-initiation complex (PIC). Upon addition of the 50S ribosomal subunit IF-1, IF-2 and IF-3 are released leaving the mature 70S translation initiation complex. This chain is Translation initiation factor IF-1, found in Desulforamulus reducens (strain ATCC BAA-1160 / DSM 100696 / MI-1) (Desulfotomaculum reducens).